Reading from the N-terminus, the 283-residue chain is Phosphatidylglycerol--prolipoprotein diacylglyceryl transferase (283 aa).

4 helical membrane-spanning segments follow: residues I20–L40, L60–E80, I94–V114, and L121–G141. R142 serves as a coordination point for a 1,2-diacyl-sn-glycero-3-phospho-(1'-sn-glycerol). 3 helical membrane passes run F183 to Y203, G214 to L234, and Q248 to L268.

It belongs to the Lgt family.

The protein resides in the cell inner membrane. The enzyme catalyses L-cysteinyl-[prolipoprotein] + a 1,2-diacyl-sn-glycero-3-phospho-(1'-sn-glycerol) = an S-1,2-diacyl-sn-glyceryl-L-cysteinyl-[prolipoprotein] + sn-glycerol 1-phosphate + H(+). It participates in protein modification; lipoprotein biosynthesis (diacylglyceryl transfer). Catalyzes the transfer of the diacylglyceryl group from phosphatidylglycerol to the sulfhydryl group of the N-terminal cysteine of a prolipoprotein, the first step in the formation of mature lipoproteins. This is Phosphatidylglycerol--prolipoprotein diacylglyceryl transferase from Synechocystis sp. (strain ATCC 27184 / PCC 6803 / Kazusa).